A 235-amino-acid polypeptide reads, in one-letter code: Protein LIFEGUARD 1 (235 aa).

7 helical membrane passes run 33-53, 67-87, 95-115, 120-140, 149-169, 178-198, and 212-232; these read YSIL…VYFV, LAVF…LLAF, CIVL…CCSL, IVLE…IYTF, FSFL…FTLL, LSSM…IIFD, and ITAA…LLGI.

The protein belongs to the BI1 family. As to expression, expressed at very low in leaves.

The protein localises to the membrane. In terms of biological role, (Microbial infection) Facilitates the development of the powdery mildew fungus E.cruciferarum. Functionally, (Microbial infection) May prevent cell death upon A.alternata f.sp. lycopersici (AAL) toxin treatment. This Arabidopsis thaliana (Mouse-ear cress) protein is Protein LIFEGUARD 1.